Here is a 346-residue protein sequence, read N- to C-terminus: Autophagy-related protein 3 (346 aa).

The tract at residues 85-161 (DFAGDAGHEE…DDDDEAIIRA (77 aa)) is flexible region. Cys238 functions as the Glycyl thioester intermediate in the catalytic mechanism. A handle region region spans residues 242 to 322 (SVMKTLLDRA…DQEVAIRVDQ (81 aa)).

It belongs to the ATG3 family. Monomer. Interacts with apg-6/atg8 through an intermediate thioester bond through the C-terminal Gly of apg-6/atg8. Also interacts with the 40 amino acid C-terminal region of the E1-like apg-5/atg7 enzyme. Also interacts with the atg12-apg-4/atg5 conjugate.

It is found in the cytoplasm. E2 conjugating enzyme required for the cytoplasm to vacuole transport (Cvt) and autophagy. Required for selective autophagic degradation of the nucleus (nucleophagy) as well as for mitophagy which contributes to regulate mitochondrial quantity and quality by eliminating the mitochondria to a basal level to fulfill cellular energy requirements and preventing excess ROS production. Responsible for the E2-like covalent binding of phosphatidylethanolamine to the C-terminal Gly of apg-6/atg8. The atg12-apg-4/atg5 conjugate plays a role of an E3 and promotes the transfer of apg-6/atg8 from apg-3/atg3 to phosphatidylethanolamine (PE). This step is required for the membrane association of apg-6/atg8. The formation of the apg-6/atg8-phosphatidylethanolamine conjugate is essential for autophagy and for the cytoplasm to vacuole transport (Cvt). The apg-6/atg8-PE conjugate mediates tethering between adjacent membranes and stimulates membrane hemifusion, leading to expansion of the autophagosomal membrane during autophagy. The polypeptide is Autophagy-related protein 3 (apg-3) (Neurospora crassa (strain ATCC 24698 / 74-OR23-1A / CBS 708.71 / DSM 1257 / FGSC 987)).